Here is a 2222-residue protein sequence, read N- to C-terminus: Protein SWEETIE (2222 aa).

HEAT repeat units follow at residues 37–75 (LLCFEILSDLISAIDEEPKESLLVTQRKCEDALYSLVTL), 228–265 (SEFDTLASYCVKGIEDSESSVRDAFAEALGSLLALGMH), 331–368 (SELQDYSLPIMDMLRGDSSIDAHALACVLYILRVGVID), 510–540 (PARLPRSVLEVSKKMLTESRRNVTVASSEKE), 541–578 (AGWLLLSSLLNSMPKEEFGDQDFDILILWTDVFAGNPE), 611–648 (CNDGILLQPVLANLRSALSCVSTMANKRFSDVKTLVDI), 768–807 (QGMLSLLSVIQQCLKAGKKQQWRTASLTNICAGLLAGLKA), 898–936 (MALSSLVPATVNSVSSLTKTSVLGLKIWALHGLLLTIEA), 968–1008 (QGIG…WQEI), and 1029–1066 (VSVHIHVKNLLMTLASRQPIIRRLSVSTLRHLVEKDPV). The interval 1133–1165 (IAENDPAYTRENLGDDDEDMVSSSSGKSIRANP) is disordered. 10 HEAT repeats span residues 1238 to 1269 (MRPIGVGLLSTILEKFKLVADPELPGHLLLEQ), 1270 to 1306 (YQAQLLSAVRTALDANSGPVLLEAGLQLATKIMTSGI), 1312 to 1354 (VAVK…AHAS), 1372 to 1410 (VEFEALLPMFSKSSDLLGRYWIQVLKGYSYICLCQNLKK), 1434 to 1474 (EAWP…LEAE), 1550 to 1586 (DLCQELLQVLSYSFHMDSSWDILAVSVVQQISQNCPK), 1783 to 1820 (VMLKSCQISIAAVVKDSNVQVQATVLQVLKSLVQRYNN), 1836 to 1874 (GDIVSLMQRALLKPVNTESVVIAGECLRFIMLLQTHSIT), 1880 to 1917 (GFMSLFLEVVLVVFSKTSDGVSQEVLELRNVAVRLVSH), and 1966 to 2006 (AMDI…QVST). Residues 1992–2203 (EALSTMPTSF…DESSKEHVGA (212 aa)) form a disordered region. The segment covering 1996–2009 (TMPTSFNQVSTVES) has biased composition (polar residues). Residues 2010–2027 (GTDEEEEEEEDDDDDDWD) are compositionally biased toward acidic residues. Positions 2028–2040 (TFQSFPASTNLEG) are enriched in polar residues. Over residues 2062-2072 (QDDESNAEETD) the composition is skewed to acidic residues. Basic and acidic residues-rich tracts occupy residues 2073-2096 (DQHLASDHATDITREDSNDKSKEV) and 2108-2124 (TREDSVDKSKEVEEETV). A compositionally biased stretch (polar residues) spans 2150–2164 (NEQSVESKNLESENI). The segment covering 2191–2202 (SPEDESSKEHVG) has biased composition (basic and acidic residues).

Belongs to the HEATR5 family.

In terms of biological role, may regulate multiple metabolic, hormonal and stress-related pathways. Required for carbohydrate metabolism and homoeostasis. May also monitor ethylene biosynthesis and senescence. This is Protein SWEETIE from Arabidopsis thaliana (Mouse-ear cress).